Here is a 134-residue protein sequence, read N- to C-terminus: GSH-induced LITAF domain protein (134 aa).

Residues 33–113 (DPLGAPIQQT…CGNKVADFEK (81 aa)) enclose the LITAF domain. Zn(2+) is bound by residues cysteine 53 and cysteine 56. Residues 68–88 (PGVAAVVACMMPFMLGFCFLC) are membrane-binding amphipathic helix. Residues cysteine 101 and cysteine 104 each coordinate Zn(2+).

It belongs to the CDIP1/LITAF family. In terms of assembly, interacts (via N- and C-terminal) with MIEL1 and LSD1 (via N-terminus).

The protein resides in the cell membrane. Its function is as follows. Acts as a membrane anchor, bringing other regulators of programmed cell death (PCD) to the plasma membrane. Negatively regulates hypersensitive cell death. In Arabidopsis thaliana (Mouse-ear cress), this protein is GSH-induced LITAF domain protein.